Consider the following 401-residue polypeptide: E3 ubiquitin-protein ligase DA2 (401 aa).

The RING-type; degenerate zinc finger occupies 59-102 (CPICFLYYPSLNRSRCCMKSICTECFLQMKNPNSARPTQCPFCK). The span at 139–153 (KEMQDDEEKMQKRLE) shows a compositional bias: basic and acidic residues. The interval 139-164 (KEMQDDEEKMQKRLESCSSSTSAMTG) is disordered.

Interacts with DA1 (via C-terminus).

The catalysed reaction is S-ubiquitinyl-[E2 ubiquitin-conjugating enzyme]-L-cysteine + [acceptor protein]-L-lysine = [E2 ubiquitin-conjugating enzyme]-L-cysteine + N(6)-ubiquitinyl-[acceptor protein]-L-lysine.. Its pathway is protein modification; protein ubiquitination. In terms of biological role, E3 ubiquitin-protein ligase involved in the regulation of organ and seed size. Acts synergistically with DA1 to regulate seed size. Functions synergistically with DA1 to restrict cell proliferation in the maternal integuments of ovules and developing seeds. Seems to function independently of BB. Possesses E3 ubiquitin-protein ligase activity in vitro. Polyubiquitinates DA1, DAR1 and DAR2, but not DAR3. The protein is E3 ubiquitin-protein ligase DA2 of Arabidopsis thaliana (Mouse-ear cress).